Consider the following 34-residue polypeptide: Non-cysteinic peptide Bs 10 (34 aa).

Positions 1–34 are disordered; sequence VTMGYIKDGDGKKIAKKKNKNGRKHVEIDLNKVG. The segment covering 14-23 has biased composition (basic residues); sequence IAKKKNKNGR. Basic and acidic residues predominate over residues 24-34; it reads KHVEIDLNKVG.

As to expression, expressed by the venom gland.

The protein localises to the secreted. This Hottentotta tamulus sindicus (Scorpion) protein is Non-cysteinic peptide Bs 10.